A 612-amino-acid chain; its full sequence is MSKITIKTLKFSNVMSYGKDIVIHFDKNPVTQLIGGNGLGKSTIATVIEELFYNKNSRGIKKDALFSWNAPKKEYDMHAYFSKDEDEYELHKVVKSTAKVTLIKNGEDISGHTATQTYKMIEEIMGGDFQTFTKLIYQSVGSNLDFLKATDATRKAFLVNLFNQEQYKEMSETIKADRKEIANTLNNLQGQMAVITKILNGKNNLGTLQEPVEVPEFDEEPLAQELTESKIKAALAKSQEANITKLRNLDKAVQVAEQSFEPFKNLPAPTDQNEEISSVTRDLTIVTSRASEVKKRYQKFKQEASNTECPTCGTHLNTTAAQKAMDMARVEYDPLFKEKQSLEAKLEQLKKEQLEYVAYTRAKDALDKAVVARDEFKNSMSDASFEELNVQILQVQIRQLEQEIADGRSKVAIAKEHNATVELANAKYKAKLEQIEKAEAEMTEITSKLDGVSEAVADLDILIAALKNLVGYKLEHSVKVFEELINKYLSIMTGGKFALGFELDETKLQVVIFNDGNRTSMENCSTGQQSRINLATLLAIRMLLTSISKVNINLLFLDEVISFIDTKGLDTLVELLNEEESLNSIIVSHGHTHPLAHKITVKKDAEGFSYLE.

35–42 serves as a coordination point for ATP; it reads GGNGLGKS. Coiled coils occupy residues 163 to 193 and 288 to 459; these read NQEQYKEMSETIKADRKEIANTLNNLQGQMA and SRAS…VADL.

The protein to phage T4 protein GP46. As to quaternary structure, could consist of two subunits: D13 and D12.

In terms of biological role, possible exonuclease that may play a role in viral genome replication, DNA recombination, and host DNA degradation. This Escherichia phage T5 (Enterobacteria phage T5) protein is Probable exonuclease subunit 2 (D13).